The following is a 265-amino-acid chain: Palmitoyltransferase ZDHHC21 (265 aa).

Residues 1–16 (MGLRIHFVVDPHGWCC) lie on the Cytoplasmic side of the membrane. Residues 17–37 (MGLIVFVWLYNIVLIPKIVLF) form a helical membrane-spanning segment. Residues 38 to 44 (PHYEEGH) lie on the Extracellular side of the membrane. Residues 45–65 (IPGILIIIFYGISIFCLVALV) traverse the membrane as a helical segment. The Cytoplasmic segment spans residues 66-133 (RASITDPGRL…NNCVGEDNHW (68 aa)). Positions 90–140 (ELCNKCNLMRPKRSHHCSRCGHCVRRMDHHCPWINNCVGEDNHWLFLQLCF) constitute a DHHC domain. The active-site S-palmitoyl cysteine intermediate is cysteine 120. A helical membrane pass occupies residues 134 to 154 (LFLQLCFYTELLTCYALMFSF). Residues 155 to 185 (CHYYYFLPLKKRNLDLFVFRHELAIMRLAAF) lie on the Extracellular side of the membrane. The helical transmembrane segment at 186-206 (MGITMLVGITGLFYTQLIGII) threads the bilayer. Residues 207-265 (TDTTSIEKMSNCCEDISRPRKPWQQTFSEVFGTRWKILWFIPFRQRQPLRVPYHFANHV) are Cytoplasmic-facing.

The protein belongs to the DHHC palmitoyltransferase family. In terms of tissue distribution, widely expressed.

Its subcellular location is the golgi apparatus membrane. It is found in the golgi apparatus. The protein resides in the cis-Golgi network membrane. It localises to the cell membrane. It carries out the reaction L-cysteinyl-[protein] + hexadecanoyl-CoA = S-hexadecanoyl-L-cysteinyl-[protein] + CoA. Functionally, palmitoyltransferase that catalyzes the addition of palmitate onto various protein substrates. Palmitoylates sex steroid hormone receptors, including ESR1, PGR and AR, thereby regulating their targeting to the plasma membrane. This affects rapid intracellular signaling by sex hormones via ERK and AKT kinases and the generation of cAMP, but does not affect that mediated by their nuclear receptor. Palmitoylates FYN, regulates its localization in hair follicles and plays a key role in epidermal homeostasis and hair follicle differentiation. Through the palmitoylation of PLCB1 and the regulation of PLCB1 downstream signaling may indirectly regulate the function of the endothelial barrier and the adhesion of leukocytes to the endothelium. Also has a palmitoyltransferase activity toward ADRA1D, positively regulating its activity and expression and may thereby play a role in vascular contraction. May also palmitoylate eNOS and LCK. The sequence is that of Palmitoyltransferase ZDHHC21 from Homo sapiens (Human).